The chain runs to 520 residues: Cytochrome P450 315a1, mitochondrial (520 aa).

Heme is bound at residue Cys-466.

This sequence belongs to the cytochrome P450 family. It depends on heme as a cofactor. Complex coexpression pattern of dib (disembodied) and sad (shade) in the early embryo that restricts to the prothoracic gland cells of the developing ring gland during late embryogenesis. In larvae and adult, coexpression is seen in prothoracic gland and follicle cells of the ovary. In adults, coexpression is seen in the follicle cells, sad only is expressed in nurse cells.

Its subcellular location is the mitochondrion membrane. It catalyses the reaction 2-deoxyecdysone + 2 reduced [adrenodoxin] + O2 + 2 H(+) = ecdysone + 2 oxidized [adrenodoxin] + H2O. The catalysed reaction is 2,22-dideoxyecdysone + 2 reduced [adrenodoxin] + O2 + 2 H(+) = 22-deoxyecdysone + 2 oxidized [adrenodoxin] + H2O. It functions in the pathway steroid biosynthesis; ecdysteroid biosynthesis. Functionally, required for CNS development: midline glial cells. Involved in the metabolism of insect hormones: responsible for ecdysteroid C2-hydroxylase activity. May be involved in the breakdown of synthetic insecticides. This Drosophila melanogaster (Fruit fly) protein is Cytochrome P450 315a1, mitochondrial.